Reading from the N-terminus, the 139-residue chain is D-ribose pyranase (139 aa).

The active-site Proton donor is His20. Residues Asp28, His106, and 128–130 (YAN) contribute to the substrate site.

The protein belongs to the RbsD / FucU family. RbsD subfamily. In terms of assembly, homodecamer.

It is found in the cytoplasm. It catalyses the reaction beta-D-ribopyranose = beta-D-ribofuranose. Its pathway is carbohydrate metabolism; D-ribose degradation; D-ribose 5-phosphate from beta-D-ribopyranose: step 1/2. Catalyzes the interconversion of beta-pyran and beta-furan forms of D-ribose. The sequence is that of D-ribose pyranase from Vibrio campbellii (strain ATCC BAA-1116).